Here is a 238-residue protein sequence, read N- to C-terminus: uncharacterized protein (238 aa).

The protein belongs to the HyuE racemase family.

This is an uncharacterized protein from Schizosaccharomyces pombe (strain 972 / ATCC 24843) (Fission yeast).